The following is a 222-amino-acid chain: Ribonuclease S-3 (222 aa).

Positions 1–22 (MFRLQLISAFFILLFSLSPVSA) are cleaved as a signal peptide. A disulfide bridge connects residues cysteine 38 and cysteine 44. Residue asparagine 50 is glycosylated (N-linked (GlcNAc...) asparagine). The active-site Proton donor is histidine 54. RNA contacts are provided by residues histidine 54, 92–93 (QM), 109–110 (HE), and 113–114 (RH). 3 cysteine pairs are disulfide-bonded: cysteine 68–cysteine 117, cysteine 177–cysteine 210, and cysteine 193–cysteine 204. Glutamate 110 is a catalytic residue. The active-site Proton acceptor is histidine 114.

The protein belongs to the RNase T2 family.

The protein resides in the secreted. The protein localises to the extracellular space. The enzyme catalyses a ribonucleotidyl-ribonucleotide-RNA + H2O = a 3'-end 3'-phospho-ribonucleotide-RNA + a 5'-end dephospho-ribonucleoside-RNA + H(+). Its function is as follows. Self-incompatibility (SI) is the inherited ability of a flowering plant to prevent self-fertilization by discriminating between self and non-self pollen during pollination. In many species, self-incompatibility is controlled by the single, multiallelic locus S. The protein is Ribonuclease S-3 (S3) of Petunia hybrida (Petunia).